Reading from the N-terminus, the 125-residue chain is UPF0231 protein APP7_1023 (125 aa).

It belongs to the UPF0231 family.

This Actinobacillus pleuropneumoniae serotype 7 (strain AP76) protein is UPF0231 protein APP7_1023.